A 306-amino-acid polypeptide reads, in one-letter code: MAAPLPRSLSCLSRAVGWWSRQPILMTQSTAVVPVRTKKRFTPPIYQPKYKTEKEFTEYARKAGLVIPQESLERPIHLACTASIFDAYVPPEGDARVSSLSKEGLAQRTERLKKNVASQLSIRRIKESDPNFKVKDFPEKAQDIFIEAHLCLNNSDHDRLHTLVTENCFPDMVWDIKYKTVSWSFVESLEPPQVVQVRCSSLVTKSNTYGQVTVRMHTRQTLAIYDRFGRLMYGQEDVPRDVLEYVVFEKHLANPYGSWRMHGKIVPPWAPPKQPILKTVMIPGPQLKPGEEYEELQREAHKPQLA.

This sequence belongs to the mitochondrion-specific ribosomal protein mL45 family. Component of the mitochondrial ribosome large subunit (39S) which comprises a 16S rRNA and about 50 distinct proteins.

Its subcellular location is the mitochondrion. Functionally, component of the mitochondrial large ribosomal subunit (mt-LSU). Within the mitochondrial ribosomes, required to direct the nascent polypeptide toward the tunnel exit and position the exit at a distance from the membrane surface. This chain is Large ribosomal subunit protein mL45 (MRPL45), found in Bos taurus (Bovine).